Reading from the N-terminus, the 403-residue chain is 8-amino-7-oxononanoate synthase (403 aa).

Arg-25 serves as a coordination point for substrate. A pyridoxal 5'-phosphate-binding site is contributed by 112-113; it reads GY. A substrate-binding site is contributed by His-137. Ser-182, His-210, and Thr-239 together coordinate pyridoxal 5'-phosphate. Lys-242 is subject to N6-(pyridoxal phosphate)lysine. Thr-358 is a binding site for substrate.

Belongs to the class-II pyridoxal-phosphate-dependent aminotransferase family. BioF subfamily. In terms of assembly, homodimer. Pyridoxal 5'-phosphate is required as a cofactor.

The enzyme catalyses 6-carboxyhexanoyl-[ACP] + L-alanine + H(+) = (8S)-8-amino-7-oxononanoate + holo-[ACP] + CO2. It functions in the pathway cofactor biosynthesis; biotin biosynthesis. Its function is as follows. Catalyzes the decarboxylative condensation of pimeloyl-[acyl-carrier protein] and L-alanine to produce 8-amino-7-oxononanoate (AON), [acyl-carrier protein], and carbon dioxide. This chain is 8-amino-7-oxononanoate synthase, found in Marinomonas sp. (strain MWYL1).